Here is a 363-residue protein sequence, read N- to C-terminus: tRNA-specific 2-thiouridylase MnmA (363 aa).

Residues 13-20 (GLSGGVDS) and M39 each bind ATP. An interaction with target base in tRNA region spans residues 99–101 (NPD). The Nucleophile role is filled by C104. A disulfide bridge connects residues C104 and C200. Residue G128 participates in ATP binding. Residues 150-152 (KDQ) are interaction with tRNA. Residue C200 is the Cysteine persulfide intermediate of the active site. The interval 310 to 311 (RY) is interaction with tRNA.

Belongs to the MnmA/TRMU family.

Its subcellular location is the cytoplasm. It catalyses the reaction S-sulfanyl-L-cysteinyl-[protein] + uridine(34) in tRNA + AH2 + ATP = 2-thiouridine(34) in tRNA + L-cysteinyl-[protein] + A + AMP + diphosphate + H(+). Catalyzes the 2-thiolation of uridine at the wobble position (U34) of tRNA, leading to the formation of s(2)U34. The polypeptide is tRNA-specific 2-thiouridylase MnmA (Ruthia magnifica subsp. Calyptogena magnifica).